We begin with the raw amino-acid sequence, 149 residues long: UPF0178 protein HEAR0259 (149 aa).

The protein belongs to the UPF0178 family.

The chain is UPF0178 protein HEAR0259 from Herminiimonas arsenicoxydans.